Here is a 191-residue protein sequence, read N- to C-terminus: Cytochrome c oxidase assembly protein CtaG (191 aa).

The Cytoplasmic segment spans residues methionine 1–threonine 9. The chain crosses the membrane as a helical; Signal-anchor for type II membrane protein span at residues alanine 10–phenylalanine 30. Over tyrosine 31–asparagine 191 the chain is Periplasmic.

This sequence belongs to the COX11/CtaG family.

The protein localises to the cell inner membrane. Functionally, exerts its effect at some terminal stage of cytochrome c oxidase synthesis, probably by being involved in the insertion of the copper B into subunit I. The polypeptide is Cytochrome c oxidase assembly protein CtaG (Cereibacter sphaeroides (strain ATCC 17029 / ATH 2.4.9) (Rhodobacter sphaeroides)).